The sequence spans 864 residues: Ribosome biogenesis protein ERB1 (864 aa).

Residues 1-52 show a composition bias toward basic and acidic residues; it reads MAVDKGRRPVPPERRAQGRKRAEPGDVTIRETRTRPVHTPEPEPELLAKDGI. 2 disordered regions span residues 1-153 and 191-231; these read MAVD…VKEG and ESRN…STED. The segment covering 53 to 71 has biased composition (acidic residues); that stretch reads LELEDDDDNDDDDDDDDDD. Over residues 72 to 83 the composition is skewed to basic and acidic residues; the sequence is KSNHHDGAPKNE. Positions 100–135 are enriched in acidic residues; the sequence is DDGDEDEEEDDEDEDEDASDDEAFDSDDLENWDEEA. 6 WD repeats span residues 509-549, 559-599, 694-732, 735-774, 778-817, and 833-864; these read AHAP…CVAT, ADRS…KTMY, NSAM…LVKT, PGVR…RPYK, YHSR…DLLQ, and QDAL…LWTP.

This sequence belongs to the WD repeat BOP1/ERB1 family. As to quaternary structure, component of the NOP7 complex, composed of ERB1, NOP7 and YTM1. The complex is held together by ERB1, which interacts with NOP7 via its N-terminal domain and with YTM1 via a high-affinity interaction between the seven-bladed beta-propeller domains of the 2 proteins. The NOP7 complex associates with the 66S pre-ribosome.

It is found in the nucleus. It localises to the nucleolus. Its subcellular location is the nucleoplasm. Component of the NOP7 complex, which is required for maturation of the 25S and 5.8S ribosomal RNAs and formation of the 60S ribosome. This Malassezia globosa (strain ATCC MYA-4612 / CBS 7966) (Dandruff-associated fungus) protein is Ribosome biogenesis protein ERB1.